The following is a 420-amino-acid chain: 26S proteasome non-ATPase regulatory subunit 4 (420 aa).

Residues 1 to 174 (MSQEATIIAV…TGSHLISVAP (174 aa)) form the VWFA domain. 3 UIM domains span residues 210–229 (AEDPDLLYALRVSMEDQRMR), 255–274 (SEEAMLQQALAMSMQMNNTE), and 288–307 (SEEDQIAYALRMSLQQMGEE). A disordered region spans residues 392 to 420 (RKAINALTKSQSQRGSKKDEKEDEDKQNS). Basic and acidic residues predominate over residues 407-420 (SKKDEKEDEDKQNS).

The protein belongs to the proteasome subunit S5A family. In terms of assembly, the 26S proteasome is composed of a core protease, known as the 20S proteasome, capped at one or both ends by the 19S regulatory complex (RC). The RC is composed of at least 18 different subunits in two subcomplexes, the base and the lid, which form the portions proximal and distal to the 20S proteolytic core, respectively.

In terms of biological role, binds and presumably selects ubiquitin-conjugates for destruction. This Schistosoma mansoni (Blood fluke) protein is 26S proteasome non-ATPase regulatory subunit 4.